Consider the following 552-residue polypeptide: E3 ubiquitin-protein ligase MGRN1 (552 aa).

Glycine 2 is lipidated: N-myristoyl glycine. The RING-type zinc-finger motif lies at 278-317; sequence CVVCLSDLRDTLILPCRHLCLCTSCADTLRYQANNCPICR. The interval 355-384 is disordered; that stretch reads SCPFKKSKPHPASLASKKPKRETNSDSVPP. The Required for TSG101-binding motif lies at 406 to 409; that stretch reads PSAP. Tyrosine 411 is modified (phosphotyrosine). Positions 439-552 are disordered; sequence SSRQKGRPQS…PDSCSVGIDE (114 aa). Over residues 450–460 the composition is skewed to polar residues; that stretch reads APDSTLRSPSS. The span at 464–475 shows a compositional bias: acidic residues; the sequence is EEDEEKLSEDVD. Serine 471 bears the Phosphoserine mark. A compositionally biased stretch (polar residues) spans 504–523; that stretch reads SSSPQQGTRAASIENVLQDS. Serine 524 bears the Phosphoserine mark.

Interacts with MC1R and MC4R, but not with TBXA2R. Interacts with TSG101. Interacts with mislocalized cytosolically exposed PRNP; this interaction alters MGRN1 subcellular location and causes lysosomal enlargement. Post-translationally, autoubiquitinated in vitro.

The protein localises to the early endosome. It localises to the cytoplasm. Its subcellular location is the cytosol. The protein resides in the nucleus. It is found in the cell membrane. It carries out the reaction S-ubiquitinyl-[E2 ubiquitin-conjugating enzyme]-L-cysteine + [acceptor protein]-L-lysine = [E2 ubiquitin-conjugating enzyme]-L-cysteine + N(6)-ubiquitinyl-[acceptor protein]-L-lysine.. It functions in the pathway protein modification; protein ubiquitination. Functionally, E3 ubiquitin-protein ligase. Mediates monoubiquitination at multiple sites of TSG101 in the presence of UBE2D1, but not of UBE2G1, nor UBE2H. Plays a role in the regulation of endosome-to-lysosome trafficking. Impairs MC1R- and MC4R-signaling by competing with GNAS-binding to MCRs and inhibiting agonist-induced cAMP production. Does not inhibit ADRB2-signaling. Does not promote MC1R ubiquitination. Acts also as a negative regulator of hedgehog signaling. The polypeptide is E3 ubiquitin-protein ligase MGRN1 (MGRN1) (Homo sapiens (Human)).